A 637-amino-acid polypeptide reads, in one-letter code: Chaperone protein HtpG (637 aa).

The a; substrate-binding stretch occupies residues 1–328 (MADIEELKFD…SSDLPLNISR (328 aa)). The segment at 329–556 (ETLQNNRIVE…DNSMDIRMER (228 aa)) is b. The disordered stretch occupies residues 488–508 (IGASDDSGDKTSEDSGESASD). Residues 494–508 (SGDKTSEDSGESASD) show a composition bias toward basic and acidic residues. Positions 557–637 (FLREQKQLNY…GVLAKIFSSK (81 aa)) are c.

This sequence belongs to the heat shock protein 90 family. In terms of assembly, homodimer.

Its subcellular location is the cytoplasm. Functionally, molecular chaperone. Has ATPase activity. This is Chaperone protein HtpG from Anaplasma phagocytophilum (strain HZ).